Consider the following 64-residue polypeptide: Large ribosomal subunit protein bL35 (64 aa).

The protein belongs to the bacterial ribosomal protein bL35 family.

The chain is Large ribosomal subunit protein bL35 from Clavibacter michiganensis subsp. michiganensis (strain NCPPB 382).